The primary structure comprises 90 residues: Antitoxin VapB35 (90 aa).

A disordered region spans residues 53-90 (GSVQPARVHGPAPRPTIPMRGGLDSGTLLERMRAEERY).

This sequence belongs to the phD/YefM antitoxin family.

Antitoxin component of a type II toxin-antitoxin (TA) system. Neutralizes the effect of cognate toxin VapC35. This Mycobacterium tuberculosis (strain CDC 1551 / Oshkosh) protein is Antitoxin VapB35 (vapB35).